The chain runs to 296 residues: uncharacterized protein (296 aa).

Its subcellular location is the mitochondrion. This is an uncharacterized protein from Podospora anserina (strain S / ATCC MYA-4624 / DSM 980 / FGSC 10383) (Pleurage anserina).